A 4699-amino-acid polypeptide reads, in one-letter code: Fat-like cadherin-related tumor suppressor homolog (4699 aa).

The first 38 residues, 1–38, serve as a signal peptide directing secretion; it reads MFTMKIKKYVTPVKRKAFTILQWISLLCSLWLIPTVQS. Over 39–4285 the chain is Extracellular; it reads KADEKHTATL…KNFSIEHISG (4247 aa). Cadherin domains follow at residues 63-183, 184-291, 288-400, 401-507, 508-613, 614-716, 773-877, 878-980, 981-1088, 1089-1198, 1194-1299, 1300-1405, 1408-1506, 1507-1612, 1613-1717, 1718-1815, 1816-1932, 1933-2033, 2034-2140, 2141-2241, 2242-2341, 2342-2449, 2450-2551, 2552-2654, 2655-2763, 2764-2860, 2861-2967, 2968-3072, 3068-3169, 3170-3273, 3274-3378, 3379-3483, 3484-3588, and 3589-3696; these read SHSV…SPLF, YPTQ…APEI, APEI…IPIF, TQEI…DPIF, ENVN…RPQF, ERVN…SSIL, VNFP…RPVI, QKTL…APVF, GVQE…APEF, DDFV…KPVY, DKPV…SPEF, DQRV…APLI, KTSE…PPQF, AKDV…HPEF, TAKI…PPKF, PTNN…IPYF, VQNE…PPVF, NERE…NFAF, QRES…CPLF, VNMP…MPVF, EKQF…YPEI, ESDI…APCF, VEPS…SPLF, DQST…VPYF, LLKE…IPTF, EKSS…YPKF, DNTF…APVF, KLPI…KPRY, LKPR…MPIF, SMAQ…PPEF, SMRQ…SPTF, LQNL…APIF, SSSN…PPIV, and TPLE…VIRF. N68 and N159 each carry an N-linked (GlcNAc...) asparagine glycan. N367 is a glycosylation site (N-linked (GlcNAc...) asparagine). N-linked (GlcNAc...) asparagine glycans are attached at residues N782, N846, and N926. N-linked (GlcNAc...) asparagine glycans are attached at residues N1109, N1201, N1315, N1442, N1476, and N1514. 19 disulfide bridges follow: C3807-C3819, C3814-C3851, C3853-C3862, C3869-C3880, C3874-C3891, C3893-C3902, C4071-C4105, C4117-C4128, C4122-C4138, C4140-C4149, C4156-C4167, C4161-C4177, C4179-C4188, C4194-C4205, C4199-C4214, C4216-C4224, C4231-C4242, C4236-C4251, and C4253-C4262. The region spanning 3865 to 3903 is the EGF-like 1 domain; the sequence is TVNACSTDPCSPQRICMPSGSALGYQCVCPKGFSGTYCE. Residues 3921–4105 enclose the Laminin G-like domain; it reads AVSFGGKSYA…KRFTNVEFKC (185 aa). 4 EGF-like domains span residues 4113 to 4150, 4152 to 4189, 4190 to 4225, and 4227 to 4263; these read RLGI…KHCE, DLDP…KRCE, YGKF…PTCE, and DVDE…ASCG. A helical transmembrane segment spans residues 4286-4306; the sequence is IISGVAVVLVIISCVLCCVVL. The Cytoplasmic portion of the chain corresponds to 4307 to 4699; sequence KRSSSSKRRN…EFLPQQQTNN (393 aa).

In terms of tissue distribution, localizes where basal actin filaments terminate.

The protein resides in the cell membrane. Its function is as follows. Required for the planar polarity of actin filament orientation at the basal side of ovarian follicle cells. Required for proper egg chamber shape and elongation of the egg chamber during oogenesis. Required for the correct planar polarization of Rab10 within the basal follicle cell epithelium and is therefore indirectly involved in the Rab10-dependent remodeling of the basal membrane during egg chamber elongation. This Drosophila melanogaster (Fruit fly) protein is Fat-like cadherin-related tumor suppressor homolog (kug).